A 366-amino-acid chain; its full sequence is UDP-N-acetylglucosamine--N-acetylmuramyl-(pentapeptide) pyrophosphoryl-undecaprenol N-acetylglucosamine transferase (366 aa).

Residues 14–16 (TGG), asparagine 125, arginine 168, serine 196, and glutamine 297 each bind UDP-N-acetyl-alpha-D-glucosamine.

It belongs to the glycosyltransferase 28 family. MurG subfamily.

The protein localises to the cell inner membrane. The catalysed reaction is di-trans,octa-cis-undecaprenyl diphospho-N-acetyl-alpha-D-muramoyl-L-alanyl-D-glutamyl-meso-2,6-diaminopimeloyl-D-alanyl-D-alanine + UDP-N-acetyl-alpha-D-glucosamine = di-trans,octa-cis-undecaprenyl diphospho-[N-acetyl-alpha-D-glucosaminyl-(1-&gt;4)]-N-acetyl-alpha-D-muramoyl-L-alanyl-D-glutamyl-meso-2,6-diaminopimeloyl-D-alanyl-D-alanine + UDP + H(+). Its pathway is cell wall biogenesis; peptidoglycan biosynthesis. Functionally, cell wall formation. Catalyzes the transfer of a GlcNAc subunit on undecaprenyl-pyrophosphoryl-MurNAc-pentapeptide (lipid intermediate I) to form undecaprenyl-pyrophosphoryl-MurNAc-(pentapeptide)GlcNAc (lipid intermediate II). The polypeptide is UDP-N-acetylglucosamine--N-acetylmuramyl-(pentapeptide) pyrophosphoryl-undecaprenol N-acetylglucosamine transferase (Rhodopseudomonas palustris (strain ATCC BAA-98 / CGA009)).